A 1480-amino-acid chain; its full sequence is Cystic fibrosis transmembrane conductance regulator (1480 aa).

The Cytoplasmic segment spans residues 1–77 (MQRSPLEKAS…KLINALRRCF (77 aa)). A helical transmembrane segment spans residues 78-98 (FWRFMFYGILLYLGEVTKAVQ). The ABC transmembrane type-1 1 domain maps to 81 to 365 (FMFYGILLYL…WAVQTWYDSL (285 aa)). Residues 99–122 (PLLLGRIIASYDPDNKTERSIAIY) lie on the Extracellular side of the membrane. Residues 123–146 (LGIGLCLLFIVRTLLLHPAIFGLH) traverse the membrane as a helical segment. Topologically, residues 147 to 195 (HIGMQMRIAMFSLIYKKTLKLSSRVLDKISIGQLVSLLSNNLNKFDEGL) are cytoplasmic. Residues 196 to 216 (ALAHFVWIAPLQVALLMGLIW) form a helical membrane-spanning segment. Over 217–222 (ELLQAS) the chain is Extracellular. The helical transmembrane segment at 223–243 (VFCGLGFLIVLALFQAGLGRM) threads the bilayer. At 244–298 (MMKYRDQRAGKINERLVITSEMIENIQSVKAYCWEEAMEKMIENLRQTELKLTRK) the chain is on the cytoplasmic side. The helical transmembrane segment at 299–319 (AAYVRYFNSSAFFFSGFFVVF) threads the bilayer. Residues 320 to 339 (LSVLPYALIKGIILRKIFTT) lie on the Extracellular side of the membrane. The chain crosses the membrane as a helical span at residues 340 to 358 (ISFCIVLRMAVTRQFPWAV). Residues 359–858 (QTWYDSLGAI…YLRYITLHKS (500 aa)) are Cytoplasmic-facing. Residues Trp-401, Ser-434, 458–465 (GSTGAGKT), and Gln-493 each bind ATP. An ABC transporter 1 domain is found at 423–646 (NGHDNLFFSN…RPDFSSKLMG (224 aa)). Residue Cys-524 is the site of S-palmitoyl cysteine attachment. A phosphoserine mark is found at Ser-549 and Ser-660. A disordered R region region spans residues 654–831 (SSERRNSILT…EEINEEDLKE (178 aa)). Residue Ser-670 is modified to Phosphoserine; by PKA. Phosphoserine is present on Ser-686. A Glycyl lysine isopeptide (Lys-Gly) (interchain with G-Cter in ubiquitin) cross-link involves residue Lys-688. Residues Ser-700 and Ser-712 each carry the phosphoserine modification. Position 717 is a phosphothreonine (Thr-717). Ser-737, Ser-753, Ser-768, Ser-790, Ser-795, and Ser-813 each carry phosphoserine. A helical transmembrane segment spans residues 859-879 (LIFVLIWCLVIFLAEVAASLV). The region spanning 859–1155 (LIFVLIWCLV…AVNSSIDVDS (297 aa)) is the ABC transmembrane type-1 2 domain. Over 880–918 (VLWLLGNTSFQDKGNSTYSRNNSYAVIITNTSSYYVFYI) the chain is Extracellular. Residues Asn-894, Asn-900, and Asn-909 are each glycosylated (N-linked (GlcNAc...) asparagine). Residues 919–939 (YVGVADTLLALGFFRGLPLVH) form a discontinuously helical membrane-spanning segment. Residues 940 to 990 (TLITVSKILHHKMLHSVLQAPMSTLNTLKAGGILNRFSKDIAILDDLLPLT) are Cytoplasmic-facing. Residues 991–1011 (IFDFIQLLLIVIGAIAVVSVL) traverse the membrane as a helical segment. The Extracellular portion of the chain corresponds to 1012–1013 (QP). Residues 1014–1034 (YIFLATVPVIAAFILLRAYFL) form a helical membrane-spanning segment. Residues 1035 to 1095 (QTSQQLKQLE…TANWFLYLST (61 aa)) lie on the Cytoplasmic side of the membrane. The chain crosses the membrane as a helical span at residues 1096-1116 (LRWFQMRIEMIFVIFFIAVTF). Over 1117–1130 (ISILTTGEGEGTVG) the chain is Extracellular. The chain crosses the membrane as a helical span at residues 1131–1151 (IILTLAMNIMSTLQWAVNSSI). Residues 1152–1480 (DVDSLMRSVS…TEEEVQETRL (329 aa)) are Cytoplasmic-facing. The ABC transporter 2 domain maps to 1210–1443 (MTIKDLTAKY…KSLFQQAISH (234 aa)). ATP is bound by residues Tyr-1219 and 1244-1251 (GRTGSGKS). The interaction with GORASP2 stretch occupies residues 1386 to 1480 (RALKQAFADC…TEEEVQETRL (95 aa)). The S-palmitoyl cysteine moiety is linked to residue Cys-1395. Phosphoserine is present on residues Ser-1444 and Ser-1456. The segment at 1452–1480 (HRNSSKYKSRPQIASLKEETEEEVQETRL) is disordered. Residues 1470–1480 (ETEEEVQETRL) are compositionally biased toward acidic residues. Positions 1478-1480 (TRL) match the PDZ-binding motif.

This sequence belongs to the ABC transporter superfamily. ABCC family. CFTR transporter (TC 3.A.1.202) subfamily. Monomer; does not require oligomerization for channel activity. May form oligomers in the membrane. Interacts with SLC26A3, SLC26A6 and NHERF1. Interacts with SHANK2. Interacts with MYO6. Interacts (via C-terminus) with GOPC (via PDZ domain); this promotes CFTR internalization and thereby decreases channel activity. Interacts with SLC4A7 through NHERF1. Found in a complex with MYO5B and RAB11A. Interacts with ANO1. Interacts with SLC26A8. Interacts with AHCYL1; the interaction increases CFTR activity. Interacts with CSE1L. The core-glycosylated form interacts with GORASP2 (via PDZ GRASP-type 1 domain) in respone to ER stress. Interacts with MARCHF2; the interaction leads to CFTR ubiqtuitination and degradation. Interacts with ADGRG2. In terms of processing, N-glycosylated. Post-translationally, phosphorylated; cAMP treatment promotes phosphorylation and activates the channel. Dephosphorylation decreases the ATPase activity (in vitro). Phosphorylation at PKA sites activates the channel. Phosphorylation at PKC sites enhances the response to phosphorylation by PKA. Phosphorylated by AMPK; this inhibits channel activity. Ubiquitinated, leading to its degradation in the lysosome. Deubiquitination by USP10 in early endosomes enhances its endocytic recycling to the cell membrane. Ubiquitinated by RNF185 during ER stress. Ubiquitinated by MARCHF2.

It is found in the apical cell membrane. Its subcellular location is the early endosome membrane. It localises to the cell membrane. The protein localises to the recycling endosome membrane. The protein resides in the endoplasmic reticulum membrane. It is found in the nucleus. The enzyme catalyses ATP + H2O + closed Cl(-) channel = ADP + phosphate + open Cl(-) channel.. It catalyses the reaction chloride(in) = chloride(out). It carries out the reaction hydrogencarbonate(in) = hydrogencarbonate(out). The catalysed reaction is ATP + H2O = ADP + phosphate + H(+). Its function is as follows. Epithelial ion channel that plays an important role in the regulation of epithelial ion and water transport and fluid homeostasis. Mediates the transport of chloride ions across the cell membrane. Possesses an intrinsic ATPase activity and utilizes ATP to gate its channel; the passive flow of anions through the channel is gated by cycles of ATP binding and hydrolysis by the ATP-binding domains. The ion channel is also permeable to HCO(3)(-); selectivity depends on the extracellular chloride concentration. Exerts its function also by modulating the activity of other ion channels and transporters. Contributes to the regulation of the pH and the ion content of the epithelial fluid layer. Modulates the activity of the epithelial sodium channel (ENaC) complex, in part by regulating the cell surface expression of the ENaC complex. May regulate bicarbonate secretion and salvage in epithelial cells by regulating the transporter SLC4A7. Can inhibit the chloride channel activity of ANO1. Plays a role in the chloride and bicarbonate homeostasis during sperm epididymal maturation and capacitation. This Plecturocebus moloch (Dusky titi monkey) protein is Cystic fibrosis transmembrane conductance regulator.